Reading from the N-terminus, the 365-residue chain is Cobalt-precorrin-5B C(1)-methyltransferase (365 aa).

Belongs to the CbiD family.

The catalysed reaction is Co-precorrin-5B + S-adenosyl-L-methionine = Co-precorrin-6A + S-adenosyl-L-homocysteine. Its pathway is cofactor biosynthesis; adenosylcobalamin biosynthesis; cob(II)yrinate a,c-diamide from sirohydrochlorin (anaerobic route): step 6/10. In terms of biological role, catalyzes the methylation of C-1 in cobalt-precorrin-5B to form cobalt-precorrin-6A. This Moorella thermoacetica (strain ATCC 39073 / JCM 9320) protein is Cobalt-precorrin-5B C(1)-methyltransferase.